The following is a 133-amino-acid chain: Large ribosomal subunit protein eL14 (133 aa).

The protein belongs to the eukaryotic ribosomal protein eL14 family.

This chain is Large ribosomal subunit protein eL14, found in Pisum sativum (Garden pea).